The primary structure comprises 235 residues: MIELEVVIRTVASFGLLLIAERILGKQTISQMTIFDFIAAITLGAIAAGLAYNTSIKPHNMAISFSIFVLTIFLISFLSIKNRKLRKFFAGDPTVLIQNGKILESNMRKMRYTLDYLNQQLREKEIFNIEEVLFAILETNGQLTVLRKPQFRHVTKQDLMIAVNQEQRLPIELIMDGEIIENNLKQNRLTESWLLEELRKRDIKVKETVYAVLLGNGDIYVDQYKDHISVPMDKE.

Transmembrane regions (helical) follow at residues 32–52 (MTIF…GLAY) and 60–80 (NMAI…FLSI).

It belongs to the UPF0702 family.

It localises to the cell membrane. The chain is UPF0702 transmembrane protein YdfS (ydfS) from Bacillus subtilis (strain 168).